The primary structure comprises 45 residues: Single-stranded DNA-binding protein (45 aa).

In terms of assembly, homodimer in the absence of DNA, monomer when binding DNA.

Functionally, binds preferentially to single-stranded DNA and therefore, destabilizes double-stranded DNA. It is involved in DNA replication, repair and recombination. Binds ss-DNA as the replication fork advances and stimulates the replisome processivity and accuracy. This chain is Single-stranded DNA-binding protein (32), found in Enterobacteria phage RB3 (Bacteriophage RB3).